An 88-amino-acid chain; its full sequence is UPF0250 protein SO_1163 (88 aa).

Belongs to the UPF0250 family.

The protein is UPF0250 protein SO_1163 of Shewanella oneidensis (strain ATCC 700550 / JCM 31522 / CIP 106686 / LMG 19005 / NCIMB 14063 / MR-1).